The chain runs to 378 residues: Putative glutamate--cysteine ligase 2 (378 aa).

Belongs to the glutamate--cysteine ligase type 2 family. YbdK subfamily.

The catalysed reaction is L-cysteine + L-glutamate + ATP = gamma-L-glutamyl-L-cysteine + ADP + phosphate + H(+). Its function is as follows. ATP-dependent carboxylate-amine ligase which exhibits weak glutamate--cysteine ligase activity. This Bdellovibrio bacteriovorus (strain ATCC 15356 / DSM 50701 / NCIMB 9529 / HD100) protein is Putative glutamate--cysteine ligase 2.